Reading from the N-terminus, the 265-residue chain is U6 snRNA phosphodiesterase 1 (265 aa).

The interval 1 to 72 (MSAAPLVGYS…DSTKHGGRVR (72 aa)) is disordered. Residues 20-31 (DGMRTRPGDGSH) show a composition bias toward basic and acidic residues. His-120 (proton acceptor) is an active-site residue. Residue 120 to 122 (HLS) coordinates AMP. Residues Gln-164, Tyr-202, and 206–210 (SFHLS) each bind UMP. Residues Tyr-202 and 204–210 (DPSFHLS) each bind AMP. The Proton donor role is filled by His-208.

The protein belongs to the 2H phosphoesterase superfamily. USB1 family. In terms of assembly, interacts with PLRG1, CDC5L and PRPF19.

It is found in the nucleus. It carries out the reaction a 3'-end uridylyl-uridine-RNA = a 3'-end 2',3'-cyclophospho-uridine-RNA + uridine. The catalysed reaction is a 3'-end uridylyl-adenosine-RNA = a 3'-end 2',3'-cyclophospho-uridine-RNA + adenosine. With respect to regulation, 3'-5' RNA exonuclease activity is inhibited by a 3' phosphate terminated RNA. Functionally, 3'-5' RNA exonuclease that trims the 3' end of oligo(U) and oligo(A) tracts of the pre-U6 small nuclear RNA (snRNA) molecule, leading to the formation of a mature U6 snRNA 3' end-terminated with a 2',3'-cyclic phosphate. Participates in the U6 snRNA 3' end processing that prevents U6 snRNA degradation. In addition also removes uridines from the 3' end of U6atac snRNA and possibly the vault RNA VTRNA1-1. This is U6 snRNA phosphodiesterase 1 from Homo sapiens (Human).